The sequence spans 338 residues: Holliday junction branch migration complex subunit RuvB (338 aa).

A large ATPase domain (RuvB-L) region spans residues 4–184 (SDRLVSGKAR…FGISHHLQYY (181 aa)). Residues Arg24, Gly65, Lys68, Thr69, Thr70, 131 to 133 (EDY), Arg174, Tyr184, and Arg221 contribute to the ATP site. Thr69 is a Mg(2+) binding site. The segment at 185–255 (HHDELTQIVM…LADEALELLA (71 aa)) is small ATPAse domain (RuvB-S). The head domain (RuvB-H) stretch occupies residues 258 to 338 (HLGFDALDRR…NIEVPDGRNS (81 aa)). 3 residues coordinate DNA: Arg294, Arg313, and Arg318.

This sequence belongs to the RuvB family. In terms of assembly, homohexamer. Forms an RuvA(8)-RuvB(12)-Holliday junction (HJ) complex. HJ DNA is sandwiched between 2 RuvA tetramers; dsDNA enters through RuvA and exits via RuvB. An RuvB hexamer assembles on each DNA strand where it exits the tetramer. Each RuvB hexamer is contacted by two RuvA subunits (via domain III) on 2 adjacent RuvB subunits; this complex drives branch migration. In the full resolvosome a probable DNA-RuvA(4)-RuvB(12)-RuvC(2) complex forms which resolves the HJ.

The protein localises to the cytoplasm. The enzyme catalyses ATP + H2O = ADP + phosphate + H(+). Its function is as follows. The RuvA-RuvB-RuvC complex processes Holliday junction (HJ) DNA during genetic recombination and DNA repair, while the RuvA-RuvB complex plays an important role in the rescue of blocked DNA replication forks via replication fork reversal (RFR). RuvA specifically binds to HJ cruciform DNA, conferring on it an open structure. The RuvB hexamer acts as an ATP-dependent pump, pulling dsDNA into and through the RuvAB complex. RuvB forms 2 homohexamers on either side of HJ DNA bound by 1 or 2 RuvA tetramers; 4 subunits per hexamer contact DNA at a time. Coordinated motions by a converter formed by DNA-disengaged RuvB subunits stimulates ATP hydrolysis and nucleotide exchange. Immobilization of the converter enables RuvB to convert the ATP-contained energy into a lever motion, pulling 2 nucleotides of DNA out of the RuvA tetramer per ATP hydrolyzed, thus driving DNA branch migration. The RuvB motors rotate together with the DNA substrate, which together with the progressing nucleotide cycle form the mechanistic basis for DNA recombination by continuous HJ branch migration. Branch migration allows RuvC to scan DNA until it finds its consensus sequence, where it cleaves and resolves cruciform DNA. The sequence is that of Holliday junction branch migration complex subunit RuvB from Dichelobacter nodosus (strain VCS1703A).